We begin with the raw amino-acid sequence, 244 residues long: High frequency lysogenization protein HflD homolog (244 aa).

The protein belongs to the HflD family.

The protein localises to the cytoplasm. The protein resides in the cell inner membrane. This is High frequency lysogenization protein HflD homolog from Acinetobacter baumannii (strain SDF).